Consider the following 546-residue polypeptide: Aladin (546 aa).

Cys-2 bears the N-acetylcysteine mark. Ser-33 carries the post-translational modification Phosphoserine. WD repeat units lie at residues 142–180 (EFAQ…VYNA), 183–222 (TIVP…IWTL), 234–274 (GCAQ…VWDV), 280–316 (VPLP…VWEA), 324–380 (WPTL…IVAD), 386–433 (IQTP…LFRT), and 442–482 (LPCG…IAHI). Phosphoserine is present on residues Ser-495, Ser-511, Ser-522, and Ser-525. Residues 500–546 (RAQEPPAGGGGSIHDLPLFTETSPTSAPWDPLPGPPPVLPHSPHSHL) form a disordered region. Positions 529 to 539 (DPLPGPPPVLP) are enriched in pro residues. A Phosphoserine modification is found at Ser-541. A Microbody targeting signal motif is present at residues 544–546 (SHL).

As to quaternary structure, interacts with NDC1, the interaction is required for nuclear pore localization. Interacts with the inactive form aurora kinase AURKA. Interacts with PGRMC2. Widely expressed. Particularly abundant in cerebellum, corpus callosum, adrenal gland, pituitary gland, gastrointestinal structures and fetal lung.

Its subcellular location is the nucleus. The protein localises to the nuclear pore complex. The protein resides in the cytoplasm. It is found in the cytoskeleton. It localises to the spindle pole. Its subcellular location is the nucleus envelope. Its function is as follows. Plays a role in the normal development of the peripheral and central nervous system. Required for the correct localization of aurora kinase AURKA and the microtubule minus end-binding protein NUMA1 as well as a subset of AURKA targets which ensures proper spindle formation and timely chromosome alignment. The chain is Aladin (AAAS) from Homo sapiens (Human).